Consider the following 276-residue polypeptide: 4-diphosphocytidyl-2-C-methyl-D-erythritol kinase (276 aa).

Lysine 13 is an active-site residue. Residue 94–104 (PHAGGIGGGSA) coordinates ATP. Aspartate 131 is an active-site residue.

The protein belongs to the GHMP kinase family. IspE subfamily.

The catalysed reaction is 4-CDP-2-C-methyl-D-erythritol + ATP = 4-CDP-2-C-methyl-D-erythritol 2-phosphate + ADP + H(+). It functions in the pathway isoprenoid biosynthesis; isopentenyl diphosphate biosynthesis via DXP pathway; isopentenyl diphosphate from 1-deoxy-D-xylulose 5-phosphate: step 3/6. Functionally, catalyzes the phosphorylation of the position 2 hydroxy group of 4-diphosphocytidyl-2C-methyl-D-erythritol. The polypeptide is 4-diphosphocytidyl-2-C-methyl-D-erythritol kinase (Jannaschia sp. (strain CCS1)).